An 808-amino-acid polypeptide reads, in one-letter code: Type VI secretion system spike protein VgrG4b (808 aa).

This sequence belongs to the VgrG protein family.

It localises to the secreted. Functionally, part of the H2 type VI secretion system (H2-T6SS) specialized secretion system, which delivers several virulence factors in both prokaryotic and eukaryotic cells during infection. Allows the delivery of the phospholipase effector PldA to target cells where it exerts its toxicity. The polypeptide is Type VI secretion system spike protein VgrG4b (Pseudomonas aeruginosa (strain ATCC 15692 / DSM 22644 / CIP 104116 / JCM 14847 / LMG 12228 / 1C / PRS 101 / PAO1)).